The sequence spans 466 residues: Cysteine--tRNA ligase (466 aa).

Residue Cys29 coordinates Zn(2+). Positions 31-41 (PTVYDFAHIGN) match the 'HIGH' region motif. Positions 210, 235, and 239 each coordinate Zn(2+). Residues 267–271 (KMSKS) carry the 'KMSKS' region motif. Lys270 contributes to the ATP binding site.

It belongs to the class-I aminoacyl-tRNA synthetase family. As to quaternary structure, monomer. The cofactor is Zn(2+).

Its subcellular location is the cytoplasm. The catalysed reaction is tRNA(Cys) + L-cysteine + ATP = L-cysteinyl-tRNA(Cys) + AMP + diphosphate. This Solibacter usitatus (strain Ellin6076) protein is Cysteine--tRNA ligase.